The chain runs to 804 residues: MLDLVHKIFDSRNRKIKRKLKDGLEQVNSLETRIRDLSSDELRNKTSEFKERLFKQSASLDEILPEAYACVREASLRTLGMRHFDVQIMGGIVLHWGMISEMHTGEGKTLVATLAAYLNALSEKGVHVVTVNDYLARRDTEWMKQIYRHLGLQVSCITSDMRDPERAHAYKADITYATNNELGFDYLRDNMKFSKGEMVQRDLHYAIVDEVDSILIDEARTPLIISGVTDNASYLYASMNKLAEKLDSTLYIVDEKTRTVSLTEEGQEAIEKLLMAEKFIESGSSLYEPQNLQLVHCLNQSLKAINLFQKNKDYIVQDGQIVLIDEFTGRMMHGRRYSEGLHQALEAKENLKIQNENQTLASITFQNYFRMYGKLSGMTGTAATEREEFSTIYGLEVVQIPSHLPVRRVDHDDEIYASKKEKYEAILALAKECHEKLQPILIGTTSIENSEELSRELKKAKLKHSVLNAKQHAFEAEIIAQAGKPGAITIATNMAGRGTDIQLGGNINFNISANDEAEKEHAKNEEIVRKAGGLYVIGTERHESRRIDNQLRGRSGRQGDPGESKFFLSLDDDLLRVFGTSGIRNMLKKQLSNNGAIKHSYITRSLEKAQKKVESRNYEIRKNLIKFDDVINEQRKVIFSQRNNIMESGDIDLLPIVTEVNAKTLENARSKNFYDISTLIHSMQSIYNEDFKELHKTEDIDGFIDSKTKSIIAEKERAHVEFLLEIKKRIMIAILDQLWKEHLQFLENLRLSINLKAVAQKNPLIEFKHEAFQAFQRLSERWHENIIASFVRVKLVERMHMKVM.

Residues Gln-87, Gly-105–Thr-109, and Asp-500 each bind ATP.

It belongs to the SecA family. As to quaternary structure, monomer and homodimer. Part of the essential Sec protein translocation apparatus which comprises SecA, SecYEG and auxiliary proteins SecDF-YajC and YidC.

It is found in the cell inner membrane. Its subcellular location is the cytoplasm. The enzyme catalyses ATP + H2O + cellular proteinSide 1 = ADP + phosphate + cellular proteinSide 2.. In terms of biological role, part of the Sec protein translocase complex. Interacts with the SecYEG preprotein conducting channel. Has a central role in coupling the hydrolysis of ATP to the transfer of proteins into and across the cell membrane, serving both as a receptor for the preprotein-SecB complex and as an ATP-driven molecular motor driving the stepwise translocation of polypeptide chains across the membrane. This chain is Protein translocase subunit SecA, found in Neorickettsia sennetsu (strain ATCC VR-367 / Miyayama) (Ehrlichia sennetsu).